A 242-amino-acid polypeptide reads, in one-letter code: Probable transcriptional regulatory protein Bphyt_1301 (242 aa).

Belongs to the TACO1 family.

Its subcellular location is the cytoplasm. This chain is Probable transcriptional regulatory protein Bphyt_1301, found in Paraburkholderia phytofirmans (strain DSM 17436 / LMG 22146 / PsJN) (Burkholderia phytofirmans).